Here is a 431-residue protein sequence, read N- to C-terminus: 23S rRNA (uracil(1939)-C(5))-methyltransferase RlmD (431 aa).

The region spanning 10 to 68 is the TRAM domain; that stretch reads RVTTRQIITVKVNDLDSFGQGVARHNGKALFIPGLLPEESAEVIITEDKKQFARARVSR. 4 residues coordinate [4Fe-4S] cluster: Cys81, Cys87, Cys90, and Cys161. 6 residues coordinate S-adenosyl-L-methionine: Gln264, Phe293, Asn298, Glu314, Asn341, and Asp362. The active-site Nucleophile is the Cys388.

The protein belongs to the class I-like SAM-binding methyltransferase superfamily. RNA M5U methyltransferase family. RlmD subfamily.

It catalyses the reaction uridine(1939) in 23S rRNA + S-adenosyl-L-methionine = 5-methyluridine(1939) in 23S rRNA + S-adenosyl-L-homocysteine + H(+). In terms of biological role, catalyzes the formation of 5-methyl-uridine at position 1939 (m5U1939) in 23S rRNA. The polypeptide is 23S rRNA (uracil(1939)-C(5))-methyltransferase RlmD (Salmonella typhi).